The primary structure comprises 442 residues: Histidine--tRNA ligase (442 aa).

The protein belongs to the class-II aminoacyl-tRNA synthetase family. In terms of assembly, homodimer.

The protein resides in the cytoplasm. It carries out the reaction tRNA(His) + L-histidine + ATP = L-histidyl-tRNA(His) + AMP + diphosphate + H(+). This is Histidine--tRNA ligase from Helicobacter acinonychis (strain Sheeba).